The chain runs to 152 residues: Superoxide dismutase [Cu-Zn] 2 (152 aa).

H45, H47, and H62 together coordinate Cu cation. The tract at residues 53–81 is disordered; sequence TNGSMSTGPHFNPDGKQHGAPEDANRHAG. Zn(2+) is bound by residues H62, H70, H79, and D82. Over residues 65-81 the composition is skewed to basic and acidic residues; it reads PDGKQHGAPEDANRHAG. H119 contributes to the Cu cation binding site.

It belongs to the Cu-Zn superoxide dismutase family. As to quaternary structure, homodimer. Requires Cu cation as cofactor. The cofactor is Zn(2+).

The protein resides in the cytoplasm. The catalysed reaction is 2 superoxide + 2 H(+) = H2O2 + O2. Its function is as follows. Destroys radicals which are normally produced within the cells and which are toxic to biological systems. This is Superoxide dismutase [Cu-Zn] 2 (SODCC2) from Brassica juncea (Indian mustard).